A 200-amino-acid polypeptide reads, in one-letter code: Holliday junction branch migration complex subunit RuvA (200 aa).

Residues 1-65 are domain I; it reads MYEYIKGTLT…ETEHVLYGFS (65 aa). The domain II stretch occupies residues 66–144; the sequence is SRAERECFRL…TLMPLYLEEP (79 aa). Residues 145 to 149 form a flexible linker region; sequence VVPSS. The interval 150 to 200 is domain III; that stretch reads TANSSFKEGIGALMNLGFSRLAADRMMTEAVKELSEEASVAELLPIALRKS.

The protein belongs to the RuvA family. As to quaternary structure, homotetramer. Forms an RuvA(8)-RuvB(12)-Holliday junction (HJ) complex. HJ DNA is sandwiched between 2 RuvA tetramers; dsDNA enters through RuvA and exits via RuvB. An RuvB hexamer assembles on each DNA strand where it exits the tetramer. Each RuvB hexamer is contacted by two RuvA subunits (via domain III) on 2 adjacent RuvB subunits; this complex drives branch migration. In the full resolvosome a probable DNA-RuvA(4)-RuvB(12)-RuvC(2) complex forms which resolves the HJ.

The protein resides in the cytoplasm. Its function is as follows. The RuvA-RuvB-RuvC complex processes Holliday junction (HJ) DNA during genetic recombination and DNA repair, while the RuvA-RuvB complex plays an important role in the rescue of blocked DNA replication forks via replication fork reversal (RFR). RuvA specifically binds to HJ cruciform DNA, conferring on it an open structure. The RuvB hexamer acts as an ATP-dependent pump, pulling dsDNA into and through the RuvAB complex. HJ branch migration allows RuvC to scan DNA until it finds its consensus sequence, where it cleaves and resolves the cruciform DNA. The chain is Holliday junction branch migration complex subunit RuvA from Chlamydia trachomatis serovar L2 (strain ATCC VR-902B / DSM 19102 / 434/Bu).